Consider the following 256-residue polypeptide: Hydroxyacylglutathione hydrolase (256 aa).

Zn(2+)-binding residues include His57, His59, Asp61, His62, His115, Asp134, and His172.

It belongs to the metallo-beta-lactamase superfamily. Glyoxalase II family. As to quaternary structure, monomer. It depends on Zn(2+) as a cofactor.

The catalysed reaction is an S-(2-hydroxyacyl)glutathione + H2O = a 2-hydroxy carboxylate + glutathione + H(+). It functions in the pathway secondary metabolite metabolism; methylglyoxal degradation; (R)-lactate from methylglyoxal: step 2/2. In terms of biological role, thiolesterase that catalyzes the hydrolysis of S-D-lactoyl-glutathione to form glutathione and D-lactic acid. The protein is Hydroxyacylglutathione hydrolase of Rhizobium meliloti (strain 1021) (Ensifer meliloti).